The following is a 117-amino-acid chain: Large ribosomal subunit protein bL20 (117 aa).

It belongs to the bacterial ribosomal protein bL20 family.

In terms of biological role, binds directly to 23S ribosomal RNA and is necessary for the in vitro assembly process of the 50S ribosomal subunit. It is not involved in the protein synthesizing functions of that subunit. This Chromohalobacter salexigens (strain ATCC BAA-138 / DSM 3043 / CIP 106854 / NCIMB 13768 / 1H11) protein is Large ribosomal subunit protein bL20.